The following is a 33-amino-acid chain: Dermonecrotic toxin LiSicTox-alphaI-1 (33 aa).

Mg(2+) is bound at residue Glu32.

Belongs to the arthropod phospholipase D family. Class II subfamily. Requires Mg(2+) as cofactor. Post-translationally, contains 2 disulfide bonds. As to expression, expressed by the venom gland.

It is found in the secreted. It carries out the reaction an N-(acyl)-sphingosylphosphocholine = an N-(acyl)-sphingosyl-1,3-cyclic phosphate + choline. The enzyme catalyses an N-(acyl)-sphingosylphosphoethanolamine = an N-(acyl)-sphingosyl-1,3-cyclic phosphate + ethanolamine. The catalysed reaction is a 1-acyl-sn-glycero-3-phosphocholine = a 1-acyl-sn-glycero-2,3-cyclic phosphate + choline. It catalyses the reaction a 1-acyl-sn-glycero-3-phosphoethanolamine = a 1-acyl-sn-glycero-2,3-cyclic phosphate + ethanolamine. Its function is as follows. Dermonecrotic toxins cleave the phosphodiester linkage between the phosphate and headgroup of certain phospholipids (sphingolipid and lysolipid substrates), forming an alcohol (often choline) and a cyclic phosphate. This toxin acts on sphingomyelin (SM). It may also act on ceramide phosphoethanolamine (CPE), lysophosphatidylcholine (LPC) and lysophosphatidylethanolamine (LPE), but not on lysophosphatidylserine (LPS), and lysophosphatidylglycerol (LPG). It acts by transphosphatidylation, releasing exclusively cyclic phosphate products as second products. In vivo, intradermal injection induces dermonecrosis. Induces hemolysis, increased vascular permeability, edema, inflammatory response, and platelet aggregation. In Loxosceles intermedia (Brown spider), this protein is Dermonecrotic toxin LiSicTox-alphaI-1.